We begin with the raw amino-acid sequence, 483 residues long: 2-methylcitrate dehydratase (483 aa).

This sequence belongs to the PrpD family. Monomer.

The catalysed reaction is (2S,3S)-2-methylcitrate = 2-methyl-cis-aconitate + H2O. The enzyme catalyses citrate = D-threo-isocitrate. The protein operates within organic acid metabolism; propanoate degradation. It functions in the pathway carbohydrate metabolism; tricarboxylic acid cycle; isocitrate from oxaloacetate: step 2/2. In terms of biological role, involved in the catabolism of short chain fatty acids (SCFA) via the tricarboxylic acid (TCA)(acetyl degradation route) and via the 2-methylcitrate cycle I (propionate degradation route). Catalyzes the dehydration of 2-methylcitrate (2-MC) to yield the cis isomer of 2-methyl-aconitate. It is also able to catalyze the dehydration of citrate and the hydration of cis-aconitate at a lower rate. Due to its broad substrate specificity, it seems to be responsible for the residual aconitase activity of the acnAB-null mutant. This is 2-methylcitrate dehydratase from Escherichia coli (strain K12).